The following is a 273-amino-acid chain: UPF0380 protein YfjQ (273 aa).

This sequence belongs to the UPF0380 family.

The chain is UPF0380 protein YfjQ (yfjQ) from Escherichia coli (strain K12).